Consider the following 833-residue polypeptide: DNA polymerase I, thermostable (833 aa).

A 5'-3' exonuclease domain is found at valine 173–aspartate 267. The polymerase stretch occupies residues glutamate 412–aspartate 833.

It belongs to the DNA polymerase type-A family.

The enzyme catalyses DNA(n) + a 2'-deoxyribonucleoside 5'-triphosphate = DNA(n+1) + diphosphate. In terms of biological role, in addition to polymerase activity, this DNA polymerase exhibits 5'-3' exonuclease activity. Unlikely to have 3'-5' exonuclease activity due to absence of a 3'-5' exonuclease domain. This chain is DNA polymerase I, thermostable (polA), found in Thermus filiformis.